Reading from the N-terminus, the 183-residue chain is TATA box-binding protein-like 1 (183 aa).

This sequence belongs to the TBP family. Binds TFIIA and TFIIB. Present in the brain, heart, liver and gizzard.

The protein resides in the cytoplasm. The protein localises to the nucleus. In terms of biological role, part of a specialized transcription system that mediates the transcription of most ribosomal proteins through the 5'-TCT-3' motif which is a core promoter element at these genes. Seems to also mediate the transcription of NF1. Does not bind the TATA box. This Gallus gallus (Chicken) protein is TATA box-binding protein-like 1 (TBPL1).